A 220-amino-acid chain; its full sequence is Type IV major pilin protein PilA (220 aa).

The propeptide at 1–12 (MRVSRFNPRNRG) is leader sequence. Phe-13 is subject to N-methylphenylalanine. A helical transmembrane segment spans residues 13-33 (FTLIELMIVVAIIGILAAIAI).

Belongs to the N-Me-Phe pilin family.

Its subcellular location is the fimbrium. The protein resides in the membrane. Its activity is regulated as follows. The two-component PilS2/PilR2 is required for proper assembly of T4P and regulation. Major component of the type IV pili that are required for social gliding motility through cycles of extension and retraction. Extended pili are composed of thousands of copies of PilA and retract upon binding to extracellular polysaccharides and thereby pull the cell forward. In Myxococcus xanthus (strain DK1622), this protein is Type IV major pilin protein PilA (pilA).